The sequence spans 226 residues: MYELKENPYPMQPRERLEFLGEECLSDVELLAILLRTGTKKYSSLNLALEILQHFETLDNLRKASINELREISGIGLAKSIEIRAMIEFGKRIQTTNRKRYGQVLSSREYGLSLAFEMQNFEQEHLVATYLDGQNRIIEKKTIFIGAVNQATASPREILYHAIKNLSVGLLVAHNHPSGNLKPSQADKIFTTKIKKSCEDVGINFIDHIIVGAGNYFSFREEEIRK.

The MPN domain maps to 103-225; it reads QVLSSREYGL…YFSFREEEIR (123 aa). 3 residues coordinate Zn(2+): His174, His176, and Asp187. The JAMM motif motif lies at 174–187; sequence HNHPSGNLKPSQAD.

The protein belongs to the UPF0758 family.

This chain is UPF0758 protein LL1007, found in Lactococcus lactis subsp. lactis (strain IL1403) (Streptococcus lactis).